The sequence spans 131 residues: MDKVDKSLDTWREELTDEQFHVCRLGGTERPFTGAYHDSKTPGIYHCACCGEALFDSDAKYDSGSGWPSYFQPINDEVIASLDDYSHGMHRIEVKCAKCDAHLGHVFPDGPRPTGLRYCINSLSLKLVPRD.

In terms of domain architecture, MsrB spans 8-130; that stretch reads LDTWREELTD…NSLSLKLVPR (123 aa). Cys47, Cys50, Cys96, and Cys99 together coordinate Zn(2+). Cys119 acts as the Nucleophile in catalysis.

This sequence belongs to the MsrB Met sulfoxide reductase family. Zn(2+) is required as a cofactor.

It catalyses the reaction L-methionyl-[protein] + [thioredoxin]-disulfide + H2O = L-methionyl-(R)-S-oxide-[protein] + [thioredoxin]-dithiol. In Ectopseudomonas mendocina (strain ymp) (Pseudomonas mendocina), this protein is Peptide methionine sulfoxide reductase MsrB.